A 193-amino-acid chain; its full sequence is Bradykinin-potentiating and C-type natriuretic peptides (193 aa).

Residues 1–23 (MFVSRLAASGLLLLALLALSLDG) form the signal peptide. The propeptide occupies 24–27 (KPVH). The segment at 25–173 (PVHQSKPGRS…RMKGLAKKAM (149 aa)) is disordered. Q28 bears the Pyrrolidone carboxylic acid mark. 2 consecutive propeptides follow at residues 40–43 (LSAQ) and 58–64 (LSVQQWS). Q65 carries the pyrrolidone carboxylic acid modification. The propeptide occupies 75–169 (VVVQPHESPA…GGARRMKGLA (95 aa)). Positions 95-123 (SPGPEAASGPAAPHRLPKSKGASATSAAS) are enriched in low complexity. Over residues 125-150 (PMRDLRTDGKQERQKWGRMVQPDHHA) the composition is skewed to basic and acidic residues. The span at 152-162 (PGGGGGGGGGA) shows a compositional bias: gly residues. A compositionally biased stretch (basic residues) spans 163-173 (RRMKGLAKKAM). An intrachain disulfide couples C177 to C193.

This sequence in the N-terminal section; belongs to the bradykinin-potentiating peptide family. In the C-terminal section; belongs to the natriuretic peptide family. In terms of tissue distribution, expressed by the venom gland.

The protein resides in the secreted. In terms of biological role, bradykinin-potentiating peptide both inhibits the activity of the angiotensin-converting enzyme (ACE) and enhances the action of bradykinin by inhibiting the peptidases that inactivate it. It acts as an indirect hypotensive agent. Neither synthetic Tf1, nor synthetic Tf2 show bradykinin-potentiating effects. Its function is as follows. Has a vasorelaxant activity in rat aortic strips and a diuretic potency in anesthetized rats. Has a vasorelaxant activity in rat aortic strips and a diuretic potency in anesthetized rats. Is as potent as Tf-CNP. In Protobothrops flavoviridis (Habu), this protein is Bradykinin-potentiating and C-type natriuretic peptides.